A 1647-amino-acid chain; its full sequence is MAP kinase-activating death domain protein (1647 aa).

In terms of domain architecture, uDENN spans 14-268; the sequence is YLVIVGARHP…VPVSGQKRVD (255 aa). A compositionally biased stretch (basic and acidic residues) spans 108–122; it reads EKGEGGAGSRGKEGT. The interval 108-168 is disordered; it reads EKGEGGAGSR…GKRRAKAGSR (61 aa). The segment covering 128-141 has biased composition (low complexity); that stretch reads SEEGGTESSESGSS. Positions 142-157 are enriched in polar residues; that stretch reads LQPLSADSTPDVNQSP. S156 is subject to Phosphoserine. The segment covering 158–167 has biased composition (basic residues); that stretch reads RGKRRAKAGS. Positions 289-429 constitute a cDENN domain; that stretch reads RFTLVDFPLH…ESLELKKHLK (141 aa). The dDENN domain occupies 431 to 565; sequence ALASMSLNTQ…LNPTNYAFQR (135 aa). 2 disordered regions span residues 604–636 and 678–842; these read ALSV…SSYS and NQKE…STEG. Over residues 615–630 the composition is skewed to acidic residues; sequence SEPTDDSGSDSMDYDD. 2 positions are modified to phosphoserine: S689 and S692. Residues 689 to 699 are compositionally biased toward polar residues; the sequence is SENSQENPPLR. Residues 700 to 712 show a composition bias toward low complexity; it reads SSSSTTASSSPST. Residues 750-768 show a composition bias toward basic and acidic residues; sequence NVDRRQAEIGEGSVRRRIY. Positions 790-804 are enriched in polar residues; sequence ESYTPRFSQHVSGNR. Phosphoserine is present on residues S813, S818, and S820. Residues 827 to 840 are compositionally biased toward low complexity; it reads RASSPNSTVSNTST. S858, S862, S916, S921, and S930 each carry phosphoserine. Disordered regions lie at residues 913–941, 1051–1110, and 1146–1243; these read QKSS…SSEN, KEPD…DTRS, and VFDL…DSEI. Positions 932-941 are enriched in polar residues; sequence QGRSSNSSEN. Residue S1059 is modified to Phosphoserine. A phosphothreonine mark is found at T1061 and T1066. Position 1110 is a phosphoserine (S1110). 3 stretches are compositionally biased toward polar residues: residues 1158-1173, 1189-1207, and 1234-1243; these read QISA…SSQR, RSSS…SSGE, and SRGTLSDSEI. T1237 carries the phosphothreonine modification. Residues S1239 and S1270 each carry the phosphoserine modification. In terms of domain architecture, Death spans 1340–1415; sequence GMDQGPQEMI…GLVYSQQINE (76 aa).

Belongs to the MADD family. As to quaternary structure, interacts (via death domain) with TNFRSF1A (via death domain). Interacts with PIDD1. Interacts with YWHAZ. Interacts (via death domain) with KIF1B; links the motor KIF1B to Rab3-carrying vesicles in anterograde synaptic vesicle transport. Interacts with KIF1A. Interacts (via uDENN domain) with RAB3A, RAB3B, RAB3C and RAB3D; the GTP-bound form of the Rab proteins is preferred for interaction. In terms of tissue distribution, expressed in testis, ovary, brain and heart. Expressed in spleen, thymus, prostate, testis, ovary, small instestine and colon. Expressed in liver. Not detected in the brain, breast, kidney, lung, ovary, pancreas, testis, uterus, stomach and thyroid. As to expression, expressed in the brain, breast, kidney, lung, ovary, pancreas, testis, uterus, stomach and thyroid.

It is found in the cell membrane. The protein localises to the cytoplasm. Its subcellular location is the cell projection. The protein resides in the axon. Its function is as follows. Guanyl-nucleotide exchange factor that regulates small GTPases of the Rab family. Converts GDP-bound inactive form of RAB27A and RAB27B to the GTP-bound active forms. Converts GDP-bound inactive form of RAB3A, RAB3C and RAB3D to the GTP-bound active forms, GTPases involved in synaptic vesicle exocytosis and vesicle secretion. Plays a role in synaptic vesicle formation and in vesicle trafficking at the neuromuscular junction. Involved in up-regulating a post-docking step of synaptic exocytosis in central synapses. Probably by binding to the motor proteins KIF1B and KIF1A, mediates motor-dependent transport of GTP-RAB3A-positive vesicles to the presynaptic nerve terminals. Plays a role in TNFA-mediated activation of the MAPK pathway, including ERK1/2. May link TNFRSF1A with MAP kinase activation. May be involved in the regulation of TNFA-induced apoptosis. The protein is MAP kinase-activating death domain protein of Homo sapiens (Human).